Reading from the N-terminus, the 473-residue chain is Cannabinoid receptor 1 (473 aa).

The Extracellular portion of the chain corresponds to 1–118; it reads MKSILDGLAD…CFMILTASQQ (118 aa). The segment at 2–23 is required for mitochondrial localization; that stretch reads KSILDGLADTTFRTITTDLLYM. N-linked (GlcNAc...) asparagine glycosylation is found at asparagine 79 and asparagine 85. A helical transmembrane segment spans residues 119–144; sequence LIIAVLSLTLGTFTVLENFLVLCVIL. Residues 145 to 156 lie on the Cytoplasmic side of the membrane; that stretch reads QSRTLRCRPSYH. Residues 157–177 form a helical membrane-spanning segment; it reads FIGSLAVADLLGSVIFVYSFL. Topologically, residues 178–189 are extracellular; it reads DFHVFHRKDSSN. Residues 190-214 traverse the membrane as a helical segment; sequence VFLFKLGGVTASFTASVGSLFLTAI. Topologically, residues 215–234 are cytoplasmic; sequence DRYISIHRPLAYKRIVTRTK. Residues 235–257 traverse the membrane as a helical segment; it reads AVIAFCVMWTIAIIIAVLPLLGW. The Extracellular segment spans residues 258-275; that stretch reads NCKKLKSVCSDIFPLIDE. The chain crosses the membrane as a helical span at residues 276 to 301; the sequence is NYLMFWIGVTSILLLFIVYAYVYILW. Over 302–346 the chain is Cytoplasmic; that stretch reads KAHSHAVRMLQRGTQKSIIIHTSEDGKVQITRPEQTRMDIRLAKT. The helical transmembrane segment at 347 to 367 threads the bilayer; the sequence is LVLILVVLIICWGPLLAIMVY. The Extracellular portion of the chain corresponds to 368–379; that stretch reads DVFGKMNNPIKT. The helical transmembrane segment at 380 to 401 threads the bilayer; it reads VFAFCSMLCLMDSTVNPIIYAL. Residues 402–473 are Cytoplasmic-facing; it reads RSQDLRHAFL…VSTETSGEAV (72 aa). Residue cysteine 417 is the site of S-palmitoyl cysteine attachment.

It belongs to the G-protein coupled receptor 1 family. In terms of processing, palmitoylation at Cys-417 is important for recruitment at both plasma membrane and lipid rafts and association with G protein alpha subunits.

The protein localises to the cell membrane. It is found in the mitochondrion outer membrane. It localises to the cell projection. Its subcellular location is the axon. The protein resides in the presynapse. Its activity is regulated as follows. Hemopressin, a peptide derived from hemoglobin subunit alpha (HBA1 and/or HBA2), acts as an antagonist peptide: hemopressin-binding efficiently blocks cannabinoid receptor CNR1 and subsequent signaling. In terms of biological role, G-protein coupled receptor for cannabinoids. Mediates many cannabinoid-induced effects in the central nervous system (CNS), as well as in peripheral tissues. Regulates cellular respiration and energy production in response to cannabinoids. Signaling typically involves reduction in cyclic AMP. In Taricha granulosa (Roughskin newt), this protein is Cannabinoid receptor 1 (CNR1).